An 89-amino-acid chain; its full sequence is Small ribosomal subunit protein uS15c (89 aa).

Belongs to the universal ribosomal protein uS15 family. In terms of assembly, part of the 30S ribosomal subunit.

The protein localises to the plastid. It localises to the chloroplast. This chain is Small ribosomal subunit protein uS15c (rps15), found in Chloranthus spicatus (Chulantree).